Consider the following 467-residue polypeptide: MSDVLPIILSGGSGTRLWPLSRETYPKQFLPLVGEHSMLQATWLRSAPVAAHAPIVVANEEHRFMAAEQLQQLGVKPSAILLEPKGRNTAPAIAVAALEATRNGGDPLLLVLPSDHVIRDEAAFQAAVTVAAAAAEQGKLVTFGIKPTAPETGYGYIKAGAGTGATAVERFVEKPDLATAQGYLASGEYYWNSGMFLFRASRYLEELRKFQPAIADACQKAWEGGKRDADFTRLDKDAFASSPSDSIDYAVMEKTADAVVVPLDAGWNDVGSWSSLLDVSEQDGQGNAHHGDVIQLDCKNTYAYGSRLIAMVGLENVVVVETDDAVLVGHRDRIQEVKEVVSQIKSAGRSEATWHRKVYRPWGAYDSIDMGQRFQVKRITVKPGATLSLQMHHHRAEHWIVVSGTAEVTRGDEVLLLTENQSTYIPLGVTHRLKNPGKLPLELIEVQSGSYLGEDDIVRFEDTYGRT.

The protein belongs to the mannose-6-phosphate isomerase type 2 family.

It catalyses the reaction D-mannose 6-phosphate = D-fructose 6-phosphate. It carries out the reaction alpha-D-mannose 1-phosphate + GTP + H(+) = GDP-alpha-D-mannose + diphosphate. Its pathway is nucleotide-sugar biosynthesis; GDP-alpha-D-mannose biosynthesis; GDP-alpha-D-mannose from alpha-D-mannose 1-phosphate (GTP route): step 1/1. It participates in nucleotide-sugar biosynthesis; GDP-alpha-D-mannose biosynthesis; alpha-D-mannose 1-phosphate from D-fructose 6-phosphate: step 1/2. Functionally, involved in xanthan production. This Xanthomonas campestris pv. campestris (strain B100) protein is Xanthan biosynthesis protein XanB (xanB).